Consider the following 356-residue polypeptide: Protein translocase subunit SecY (356 aa).

The next 8 membrane-spanning stretches (helical) occupy residues 24-44, 77-97, 125-145, 154-174, 183-203, 217-237, 274-294, and 317-337; these read LFVI…IPGI, IFAL…LLTV, LVLA…MPGM, FAFY…LMWL, IGNG…PPAV, FLLL…VVFI, VIPA…ASWF, and YVLL…ALVF.

Belongs to the SecY/SEC61-alpha family. As to quaternary structure, component of the Sec protein translocase complex. Heterotrimer consisting of SecY, SecE and SecG subunits. The heterotrimers can form oligomers, although 1 heterotrimer is thought to be able to translocate proteins. Interacts with the ribosome. Interacts with SecDF, and other proteins may be involved. Interacts with SecA.

The protein localises to the cell membrane. In terms of biological role, the central subunit of the protein translocation channel SecYEG. Consists of two halves formed by TMs 1-5 and 6-10. These two domains form a lateral gate at the front which open onto the bilayer between TMs 2 and 7, and are clamped together by SecE at the back. The channel is closed by both a pore ring composed of hydrophobic SecY resides and a short helix (helix 2A) on the extracellular side of the membrane which forms a plug. The plug probably moves laterally to allow the channel to open. The ring and the pore may move independently. The sequence is that of Protein translocase subunit SecY from Buchnera aphidicola subsp. Acyrthosiphon kondoi (Acyrthosiphon kondoi symbiotic bacterium).